Consider the following 228-residue polypeptide: MKHFTAAVATVALSLALAGCSFNIKTDSAPTTSPTTTSPTTSTTTTSATTSAQAAGPNYTIADYIRDNHIQETPVHHGDPGSPTIDLPVPDDWRLLPESSRAPYGGIVYTQPADPNDPPTIVAILSKLTGDIDPAKVLQFAPGELKNLPGFQGSGDGSAATLGGFSAWQLGGSYSKNGKLRTVAQKTVVIPSQGAVFVLQLNADALDDETMTLMDAANVIDEQTTITP.

The first 19 residues, 1-19 (MKHFTAAVATVALSLALAG), serve as a signal peptide directing secretion. Cysteine 20 is lipidated: N-palmitoyl cysteine. A lipid anchor (S-diacylglycerol cysteine) is attached at cysteine 20. The segment at 26–53 (TDSAPTTSPTTTSPTTSTTTTSATTSAQ) is disordered. A compositionally biased stretch (low complexity) spans 28-52 (SAPTTSPTTTSPTTSTTTTSATTSA).

Interacts with the periplasmic loop domains of the mycolate transporters MmpL3 and MmpL11. Also interacts with secreted cell envelope biosynthetic enzymes such as Ag85A. These interactions are weak and may require a putative mycobacterial adapter protein or molecule. Interacts with human ubiquitin ligase CBL.

The protein localises to the cell membrane. Its subcellular location is the secreted. Involved in cell envelope biogenesis. May act as a membrane fusion protein, connecting MmpL transporters with periplasmic proteins, and play a role in cell envelope lipid changes during biofilm maturation. Its function is as follows. Is also a virulence factor required for intracellular survival. Associates with CBL, a host ubiquitin ligase, and probably blocks the normal functions of CBL and disturbs CBL-mediated antibacterial activity. Interaction counteracts antibacterial defense but causes a reciprocal enhancement of antiviral defense. This chain is Lipoprotein LpqN, found in Mycobacterium tuberculosis (strain ATCC 25618 / H37Rv).